We begin with the raw amino-acid sequence, 876 residues long: Ergothioneine biosynthesis protein 1 (876 aa).

Residues 36-350 (IIDIRRVAVE…TYGNEYGLHL (315 aa)) form an L-histidine N(alpha)-methyltransferase region. An L-histidine-binding site is contributed by Tyr-88. 3 residues coordinate S-adenosyl-L-methionine: Gly-119, Lys-125, and Asp-146. Residues Asn-202, Tyr-242, and 315-317 (EQS) contribute to the L-histidine site. The hercynylcysteine S-oxide synthase stretch occupies residues 378–874 (ALWATWDVVT…YAWVGARVVR (497 aa)). Residues His-413, His-506, and His-510 each contribute to the Fe cation site. Disordered regions lie at residues 631-650 (GTTN…QQLP) and 732-761 (TNNG…SNTT). Over residues 744–758 (PSSETPAESSSPSDS) the composition is skewed to low complexity.

This sequence in the N-terminal section; belongs to the methyltransferase superfamily. EgtD family. In the C-terminal section; belongs to the EgtB family. It depends on Fe(2+) as a cofactor.

The protein localises to the cytoplasm. Its subcellular location is the nucleus. It carries out the reaction L-histidine + 3 S-adenosyl-L-methionine = hercynine + 3 S-adenosyl-L-homocysteine + 3 H(+). It catalyses the reaction hercynine + L-cysteine + O2 = S-(hercyn-2-yl)-L-cysteine S-oxide + H2O. It participates in amino-acid biosynthesis; ergothioneine biosynthesis. In terms of biological role, catalyzes the SAM-dependent triple methylation of the alpha-amino group of histidine to form hercynine and subsequent conjugation with cysteine and oxygen to form hercynylcysteine sulfoxide, the first two steps in the biosynthesis pathway of ergothioneine. Ergothioneine is an unusual thio-histidine betaine amino acid that acts as an antioxidant against peroxide in conidia and contributes to conidial longevity. The protein is Ergothioneine biosynthesis protein 1 of Neurospora crassa (strain ATCC 24698 / 74-OR23-1A / CBS 708.71 / DSM 1257 / FGSC 987).